A 365-amino-acid polypeptide reads, in one-letter code: Probable G-protein coupled receptor 142 (365 aa).

Over 1–66 the chain is Extracellular; the sequence is MHLNSNPNSY…WPESPERSPC (66 aa). An N-linked (GlcNAc...) asparagine glycan is attached at Asn44. The helical transmembrane segment at 67-87 threads the bilayer; sequence VAGIIPVIYYSVLLSLGLPVA. Over 88–102 the chain is Cytoplasmic; the sequence is LARLAARTRKPSYHY. A helical membrane pass occupies residues 103–123; it reads LLALTASDIVTQVIIVFVGFL. Over 124–140 the chain is Extracellular; it reads LQGAVLARQVPQAVVRT. The chain crosses the membrane as a helical span at residues 141–161; the sequence is ANILEFAANHASVWIAVLFTV. Residues 162–185 lie on the Cytoplasmic side of the membrane; that stretch reads DRYNALCRPLRHRATSSPGRTHRA. A helical transmembrane segment spans residues 186-206; it reads IAAVIGVTLLTGIPFYWWLDV. Topologically, residues 207–224 are extracellular; it reads WRDADPPSTMDKLLKWAH. A helical transmembrane segment spans residues 225–245; the sequence is CLIVYFIPCNVFLVTNSAIIL. Residues 246-264 are Cytoplasmic-facing; it reads RLRKRGQRGLRPLVSKSTA. A helical membrane pass occupies residues 265–285; sequence ILLGVTSLFALLWAPRIIVML. At 286 to 304 the chain is on the extracellular side; it reads YHLYVAPVHRDWRVHLALD. Residues 305–325 form a helical membrane-spanning segment; the sequence is IANMLAMLNTEVNFGLYCFIS. Residues 326–365 lie on the Cytoplasmic side of the membrane; that stretch reads KTFRATVRQVICDVHMACALKSQPKQTVVELMLKSVGTEL.

This sequence belongs to the G-protein coupled receptor 1 family.

The protein resides in the cell membrane. Orphan receptor. The protein is Probable G-protein coupled receptor 142 (Gpr142) of Mus musculus (Mouse).